The following is a 111-amino-acid chain: uncharacterized protein (111 aa).

Residues 20-39 (PVDTTGLIFFAVFASSFVLY) traverse the membrane as a helical segment.

It is found in the membrane. This is an uncharacterized protein from Saccharomyces cerevisiae (strain ATCC 204508 / S288c) (Baker's yeast).